A 445-amino-acid polypeptide reads, in one-letter code: UPF0210 protein SZO_15840 (445 aa).

The protein belongs to the UPF0210 family. In terms of assembly, homodimer.

This chain is UPF0210 protein SZO_15840, found in Streptococcus equi subsp. zooepidemicus (strain H70).